A 456-amino-acid chain; its full sequence is MALTLYNTLTRSEEAFTPIDPSNVRLYVCGPTVYDYAHVGNARTFSAFDLLARLLKHLYPRVTYARNITDVDDKIIDRSQRSGEPIDGVTARTTAQFHADMDALGLLRPDIEPRATTHIPQMIAMIGRLVEQGFAYAAEGHVLFHVPAMPDYGRLSRRSQDELIAGARVEVAPYKRSPADFVLWKPAKPGEPGWDSPWGTGRPGWHIECSAMTAAHLGAVFDIHGGGLDLIFPHHENEIAQSRCAHGTAVMANVWMHSGFLTIAGDKMSKSLGNFYTVRELLDEFPGEAIRLALLSAHYRQPLDFTKEKIAQAKQALDRWYGVLRGLEEVRAAEVPFDVLAALEDDLNTPLAISHLHELATAFHKADAAARPGLAGRLKAAAGLLGFLRQDPDAWFRGTPKGTDGLDEAAIEAAIQARKEARKAKDFAEADRIRAALLEQGIVLEDGPQGTSWKRA.

C29 is a Zn(2+) binding site. Residues 31–41 (PTVYDYAHVGN) carry the 'HIGH' region motif. Residues C209, H234, and E238 each contribute to the Zn(2+) site. The 'KMSKS' region motif lies at 267–271 (KMSKS). Position 270 (K270) interacts with ATP.

This sequence belongs to the class-I aminoacyl-tRNA synthetase family. Monomer. Requires Zn(2+) as cofactor.

It is found in the cytoplasm. The enzyme catalyses tRNA(Cys) + L-cysteine + ATP = L-cysteinyl-tRNA(Cys) + AMP + diphosphate. This is Cysteine--tRNA ligase from Rhodospirillum centenum (strain ATCC 51521 / SW).